Consider the following 319-residue polypeptide: Cytochrome f (319 aa).

Positions Met-1–Ala-34 are cleaved as a signal peptide. Heme-binding residues include Tyr-35, Cys-55, Cys-58, and His-59. A helical membrane pass occupies residues Val-285–Lys-305.

This sequence belongs to the cytochrome f family. As to quaternary structure, the 4 large subunits of the cytochrome b6-f complex are cytochrome b6, subunit IV (17 kDa polypeptide, petD), cytochrome f and the Rieske protein, while the 4 small subunits are PetG, PetL, PetM and PetN. The complex functions as a dimer. It depends on heme as a cofactor.

It localises to the plastid. The protein localises to the chloroplast thylakoid membrane. Functionally, component of the cytochrome b6-f complex, which mediates electron transfer between photosystem II (PSII) and photosystem I (PSI), cyclic electron flow around PSI, and state transitions. The protein is Cytochrome f of Pinus koraiensis (Korean pine).